Consider the following 601-residue polypeptide: Alpha-terpineol synthase, chloroplastic (601 aa).

The transit peptide at 1–47 (MSTISIHHVGILRNPLHSKSKRASINKPWSLSLPRSSSASRLVEPCR) directs the protein to the chloroplast. Residues Asp-357 and Asp-361 each contribute to the Mn(2+) site. The DDXXD motif motif lies at 357-361 (DDVYD). Homodimerization stretches follow at residues 363–369 (YGTLDEL) and 435–471 (EAEW…ELSL). Asp-499 and Glu-507 together coordinate Mn(2+).

Belongs to the terpene synthase family. In terms of assembly, homodimer. Requires Mn(2+) as cofactor. It depends on Mg(2+) as a cofactor.

The protein resides in the plastid. Its subcellular location is the chloroplast. The enzyme catalyses (2E)-geranyl diphosphate + H2O = (S)-alpha-terpineol + diphosphate. It carries out the reaction (2E)-geranyl diphosphate + H2O = (R)-alpha-terpineol + diphosphate. The protein operates within secondary metabolite biosynthesis; terpenoid biosynthesis. Involved in the biosynthesis of phenolic monoterpenes natural products. Monoterpene synthase which catalyzes the conversion of geranyl diphosphate (GPP) to alpha-terpineol (isomer is not determined). This Thymus caespititius (Cretan thyme) protein is Alpha-terpineol synthase, chloroplastic.